The sequence spans 525 residues: Glutamate synthase large subunit-like protein YerD (525 aa).

A helical transmembrane segment spans residues 4-24 (IIIALIAFIIGIIAIPIVLFA).

It belongs to the glutamate synthase family.

Its subcellular location is the cell membrane. The sequence is that of Glutamate synthase large subunit-like protein YerD (yerD) from Bacillus subtilis (strain 168).